Consider the following 276-residue polypeptide: tRNA dimethylallyltransferase (276 aa).

Positions 9-12 (DSLS) are interaction with substrate tRNA.

This sequence belongs to the IPP transferase family. In terms of assembly, monomer. The cofactor is Mg(2+).

The enzyme catalyses adenosine(37) in tRNA + dimethylallyl diphosphate = N(6)-dimethylallyladenosine(37) in tRNA + diphosphate. In terms of biological role, catalyzes the transfer of a dimethylallyl group onto the adenine at position 37 in tRNAs that read codons beginning with uridine, leading to the formation of N6-(dimethylallyl)adenosine (i(6)A). This Helicobacter pylori (strain G27) protein is tRNA dimethylallyltransferase (miaA).